Reading from the N-terminus, the 351-residue chain is MRILVNGGGPAGMAFAMFAARSGRGDEITVRDWTGPGDTYGFGVILPPAAVEVFRDAEPDLADELNSHITAWDRLSVHRHGRTASIPAPRLGAMDRRTLLKVLRRRCAERGVRFEHGAVDPALGDHDLVVAADGARSVTRRHRAAAFGTTTREIGPAYIWLGADRALEHLRFLVAETPDGPAVAHAYPYSPDRSTFLVEADGAPPPAVLAEWFAGPLGGARLLENRSRWSRFQEIHNRTWSAGNVVLIGDAAHTAHYSIGSGTRLALDDARALADALCAQPRLADALKGYEDARRPIVEHTQRIGRLSATWFTRLPDVPMERLLDDLATRGGQISWRDLATEGSGAVPVRG.

Belongs to the aromatic-ring hydroxylase family. Requires FAD as cofactor.

The catalysed reaction is 3-hydroxy-4-methylanthranilyl-[aryl-carrier protein] + NADH + O2 + H(+) = 3,5-dihydroxy-4-methylanthranilyl-[aryl-carrier protein] + NAD(+) + H2O. It participates in antibiotic biosynthesis. Its function is as follows. Involved in the biosynthesis of the antitumor antibiotic sibiromycin. Hydroxylates the C5 position of the peptidyl carrier protein (PCP)-bound 4-methyl-3-hydroxyanthranilic acid (4-MHA or 3H4MAA), leading to the formation of the fully substituted anthranilate moiety found in sibiromycin. This Streptosporangium sibiricum protein is 3-hydroxy-4-methyl-anthranilyl-[aryl-carrier protein] 5-monooxygenase.